We begin with the raw amino-acid sequence, 852 residues long: Bifunctional uridylyltransferase/uridylyl-removing enzyme (852 aa).

The segment at 1-318 (MPENLSSALE…STPVRVTLRI (318 aa)) is uridylyltransferase. A uridylyl-removing region spans residues 319 to 672 (DDDYIQVNNQ…SRILPQSDSF (354 aa)). An HD domain is found at 436–558 (VDDHILAVVR…VQTHERLSAL (123 aa)). ACT domains are found at residues 673-757 (QVMV…SCNR) and 785-852 (SVEI…EQLA).

It belongs to the GlnD family. Mg(2+) is required as a cofactor.

The catalysed reaction is [protein-PII]-L-tyrosine + UTP = [protein-PII]-uridylyl-L-tyrosine + diphosphate. It carries out the reaction [protein-PII]-uridylyl-L-tyrosine + H2O = [protein-PII]-L-tyrosine + UMP + H(+). Its activity is regulated as follows. Uridylyltransferase (UTase) activity is inhibited by glutamine, while glutamine activates uridylyl-removing (UR) activity. Modifies, by uridylylation and deuridylylation, the PII regulatory proteins (GlnB and homologs), in response to the nitrogen status of the cell that GlnD senses through the glutamine level. Under low glutamine levels, catalyzes the conversion of the PII proteins and UTP to PII-UMP and PPi, while under higher glutamine levels, GlnD hydrolyzes PII-UMP to PII and UMP (deuridylylation). Thus, controls uridylylation state and activity of the PII proteins, and plays an important role in the regulation of nitrogen assimilation and metabolism. The chain is Bifunctional uridylyltransferase/uridylyl-removing enzyme from Neisseria gonorrhoeae (strain ATCC 700825 / FA 1090).